A 181-amino-acid polypeptide reads, in one-letter code: Lysozyme A (181 aa).

Positions 1-19 (MRIAFFLLVLAVIIGFAYG) are cleaved as a signal peptide. A propeptide spanning residues 139 to 181 (LTDSRPLGPFNVTESEMAQLFIDHEIAMAQCEAEKTCNGFDLE) is cleaved from the precursor.

This sequence belongs to the dictyostelium lysozyme family. In terms of processing, contains six disulfide bonds.

The protein localises to the cytoplasmic vesicle lumen. It catalyses the reaction Hydrolysis of 1,4-beta-linkages between N-acetylmuramic acid and N-acetyl-D-glucosamine residues in a peptidoglycan.. In terms of biological role, has antibacterial activity against the Gram-positive bacteria B.subtilis, B.megaterium and M.luteus. No antibacterial activity detected against the Gram-positive bacterium S.aureus or against the Gram-negative bacterium E.coli. Lacks chitinase activity. The sequence is that of Lysozyme A from Dictyostelium discoideum (Social amoeba).